The sequence spans 244 residues: uncharacterized protein (244 aa).

The tract at residues 1–127 is disordered; it reads MSGPQGSDPR…YPGQYGPYGQ (127 aa). The span at 34-43 shows a compositional bias: polar residues; sequence WQQQPTQEAT. Low complexity-rich tracts occupy residues 45 to 75 and 88 to 127; these read QAPA…YAQP and PGQY…PYGQ. A helical membrane pass occupies residues 136–156; it reads VAVIGGVIAVMAVLFIGAVLI.

The protein resides in the membrane. This is an uncharacterized protein from Mycobacterium tuberculosis (strain CDC 1551 / Oshkosh).